A 291-amino-acid chain; its full sequence is MELLCCEVDTIGRAHLDRNLITDRVLQTMLKAEETSCPSMSYFKCVQKEILPNMRKIVATWMLEVCEEQKCEEEVFPLAMNYLDRFLSVEPLRKSWLQLLGATCMFLASKMKETIPLTAEKLCIYTDNSIRPDELLIMELRVLNKLKWDLASVTPHDFIEHFLNKMPLTEDTKQIIRKHAQTFVALCATDVNFISNPPSMIAAGSVAAAVQGLNLGNADSVFSTQRLTLFLSQVIKCDPDCLRACQEQIESLLESSLRQAQQQHNASSDTKNMVDEVDISCTPTDVRDVNI.

The residue at position 282 (T282) is a Phosphothreonine.

This sequence belongs to the cyclin family. Cyclin D subfamily. As to quaternary structure, interacts with the cdk4 and cdk6 protein kinases to form a serine/threonine kinase holoenzyme complex. The cyclin subunit imparts substrate specificity to the complex. Post-translationally, phosphorylation at Thr-282 by MAP kinases is required for ubiquitination and degradation by the DCX(AMBRA1) complex. In terms of processing, ubiquitinated by the DCX(AMBRA1) complex during the transition from G1 to S cell phase, leading to its degradation. The DCX(AMBRA1) complex represents the major regulator of CCND1 stability during the G1/S transition.

The protein localises to the nucleus. The protein resides in the cytoplasm. Its function is as follows. Regulatory component of the cyclin D1-CDK4 (DC) complex that phosphorylates and inhibits members of the retinoblastoma (RB) protein family including RB1 and regulates the cell-cycle during G(1)/S transition. Phosphorylation of RB1 allows dissociation of the transcription factor E2F from the RB/E2F complex and the subsequent transcription of E2F target genes which are responsible for the progression through the G(1) phase. Hypophosphorylates RB1 in early G(1) phase. Cyclin D-CDK4 complexes are major integrators of various mitogenenic and antimitogenic signals. This is G1/S-specific cyclin-D1 (ccnd1) from Xenopus laevis (African clawed frog).